We begin with the raw amino-acid sequence, 660 residues long: Bifunctional polymyxin resistance protein ArnA (660 aa).

Residues 1 to 304 (MKTVVFAYHD…TLGLVQGSRL (304 aa)) are formyltransferase ArnAFT. Residue 86-88 (HLI) coordinates (6R)-10-formyltetrahydrofolate. The active-site Proton donor; for formyltransferase activity is H104. Residues R114 and 136-140 (VKRAD) contribute to the (6R)-10-formyltetrahydrofolate site. A dehydrogenase ArnADH region spans residues 314 to 660 (RRTRVLILGV…RTVDLTDKPS (347 aa)). Residues D347 and 368-369 (DI) each bind NAD(+). Residues A393, Y398, and 432-433 (TS) each bind UDP-alpha-D-glucuronate. The Proton acceptor; for decarboxylase activity role is filled by E434. UDP-alpha-D-glucuronate-binding positions include R460, N492, 526-535 (KLIDGGKQKR), and Y613. R619 acts as the Proton donor; for decarboxylase activity in catalysis.

This sequence in the N-terminal section; belongs to the Fmt family. UDP-L-Ara4N formyltransferase subfamily. In the C-terminal section; belongs to the NAD(P)-dependent epimerase/dehydratase family. UDP-glucuronic acid decarboxylase subfamily. As to quaternary structure, homohexamer, formed by a dimer of trimers.

It catalyses the reaction UDP-alpha-D-glucuronate + NAD(+) = UDP-beta-L-threo-pentopyranos-4-ulose + CO2 + NADH. It carries out the reaction UDP-4-amino-4-deoxy-beta-L-arabinose + (6R)-10-formyltetrahydrofolate = UDP-4-deoxy-4-formamido-beta-L-arabinose + (6S)-5,6,7,8-tetrahydrofolate + H(+). It participates in nucleotide-sugar biosynthesis; UDP-4-deoxy-4-formamido-beta-L-arabinose biosynthesis; UDP-4-deoxy-4-formamido-beta-L-arabinose from UDP-alpha-D-glucuronate: step 1/3. It functions in the pathway nucleotide-sugar biosynthesis; UDP-4-deoxy-4-formamido-beta-L-arabinose biosynthesis; UDP-4-deoxy-4-formamido-beta-L-arabinose from UDP-alpha-D-glucuronate: step 3/3. Its pathway is bacterial outer membrane biogenesis; lipopolysaccharide biosynthesis. In terms of biological role, bifunctional enzyme that catalyzes the oxidative decarboxylation of UDP-glucuronic acid (UDP-GlcUA) to UDP-4-keto-arabinose (UDP-Ara4O) and the addition of a formyl group to UDP-4-amino-4-deoxy-L-arabinose (UDP-L-Ara4N) to form UDP-L-4-formamido-arabinose (UDP-L-Ara4FN). The modified arabinose is attached to lipid A and is required for resistance to polymyxin and cationic antimicrobial peptides. The protein is Bifunctional polymyxin resistance protein ArnA of Escherichia coli (strain SE11).